The following is a 422-amino-acid chain: Regulator of sigma-W protease RasP (422 aa).

4 helical membrane passes run 6–26, 175–195, 346–366, and 394–414; these read VIAFIIIFGTLVFFHELGHLL, IAAGPIMNFILAYVILVMLGL, IVNLFQFAAFLSINLGIVNLL, and EAFVVFIGVAFLMLLMLVVTW. Zn(2+) is bound at residue H20. Residue E21 is part of the active site. H24 lines the Zn(2+) pocket. Positions 186–271 constitute a PDZ domain; that stretch reads AYVILVMLGL…TLHISVTPEA (86 aa).

The protein belongs to the peptidase M50B family. Zn(2+) is required as a cofactor.

It localises to the cell membrane. Is responsible for site-2 cleavage of the RsiW anti-sigma factor. This results, after a third proteolytic step catalyzed by the ClpXP protease, in the release of SigW and the transcription activation of the genes under the control of the sigma-W factor. Can also cleave liberated signal peptides of PenP and Mpr, probably within in the cell membrane. This chain is Regulator of sigma-W protease RasP, found in Bacillus subtilis (strain 168).